The following is a 258-amino-acid chain: Deoxyribose-phosphate aldolase (258 aa).

Aspartate 102 serves as the catalytic Proton donor/acceptor. Lysine 165 (schiff-base intermediate with acetaldehyde) is an active-site residue. Lysine 199 serves as the catalytic Proton donor/acceptor.

Belongs to the DeoC/FbaB aldolase family. DeoC type 2 subfamily.

It is found in the cytoplasm. It carries out the reaction 2-deoxy-D-ribose 5-phosphate = D-glyceraldehyde 3-phosphate + acetaldehyde. Its pathway is carbohydrate degradation; 2-deoxy-D-ribose 1-phosphate degradation; D-glyceraldehyde 3-phosphate and acetaldehyde from 2-deoxy-alpha-D-ribose 1-phosphate: step 2/2. Its function is as follows. Catalyzes a reversible aldol reaction between acetaldehyde and D-glyceraldehyde 3-phosphate to generate 2-deoxy-D-ribose 5-phosphate. This is Deoxyribose-phosphate aldolase from Vibrio campbellii (strain ATCC BAA-1116).